The following is a 54-amino-acid chain: MKGIKCLSITCFLSDNSIIRVVLIRRMLKILLFSLLVLIILCFIDPILFYFICL.

The chain crosses the membrane as a helical span at residues 32–52; that stretch reads LFSLLVLIILCFIDPILFYFI.

It is found in the host membrane. This is an uncharacterized protein from Cassava vein mosaic virus (CsVMV).